A 131-amino-acid chain; its full sequence is Torsin-1A-interacting protein 2, isoform IFRG15 (131 aa).

This Homo sapiens (Human) protein is Torsin-1A-interacting protein 2, isoform IFRG15 (TOR1AIP2).